Consider the following 283-residue polypeptide: 4-diphosphocytidyl-2-C-methyl-D-erythritol kinase (283 aa).

Residue Lys10 is part of the active site. 99-109 is an ATP binding site; the sequence is PMGGGLGGGSS. The active site involves Asp141.

The protein belongs to the GHMP kinase family. IspE subfamily. As to quaternary structure, homodimer.

It carries out the reaction 4-CDP-2-C-methyl-D-erythritol + ATP = 4-CDP-2-C-methyl-D-erythritol 2-phosphate + ADP + H(+). Its pathway is isoprenoid biosynthesis; isopentenyl diphosphate biosynthesis via DXP pathway; isopentenyl diphosphate from 1-deoxy-D-xylulose 5-phosphate: step 3/6. Catalyzes the phosphorylation of the position 2 hydroxy group of 4-diphosphocytidyl-2C-methyl-D-erythritol. In Escherichia coli O81 (strain ED1a), this protein is 4-diphosphocytidyl-2-C-methyl-D-erythritol kinase.